A 452-amino-acid polypeptide reads, in one-letter code: Methionine aminopeptidase 2 (452 aa).

The disordered stretch occupies residues 1-91 (MTGVTGTEDT…KNKKKKKKKI (91 aa)). Basic and acidic residues predominate over residues 8 to 38 (EDTKVIESKINELNIDKSKPEKTNKVNKSDD). The span at 39–62 (VDNDDVDNDDNDDEDNDDDDDEIT) shows a compositional bias: acidic residues. Residues 74–91 (KKKKKNKNKNKKKKKKKI) show a composition bias toward basic residues. Histidine 203 is a binding site for substrate. A divalent metal cation-binding residues include aspartate 223, aspartate 234, and histidine 305. Histidine 313 serves as a coordination point for substrate. Positions 338 and 433 each coordinate a divalent metal cation.

Belongs to the peptidase M24A family. Methionine aminopeptidase eukaryotic type 2 subfamily. The cofactor is Co(2+). Zn(2+) is required as a cofactor. Requires Mn(2+) as cofactor. Fe(2+) serves as cofactor.

The protein resides in the cytoplasm. It catalyses the reaction Release of N-terminal amino acids, preferentially methionine, from peptides and arylamides.. Cotranslationally removes the N-terminal methionine from nascent proteins. The N-terminal methionine is often cleaved when the second residue in the primary sequence is small and uncharged (Met-Ala-, Cys, Gly, Pro, Ser, Thr, or Val). The polypeptide is Methionine aminopeptidase 2 (Candida dubliniensis (strain CD36 / ATCC MYA-646 / CBS 7987 / NCPF 3949 / NRRL Y-17841) (Yeast)).